We begin with the raw amino-acid sequence, 412 residues long: Stachydrine N-demethylase (412 aa).

In terms of domain architecture, Rieske spans 45 to 150 (LYAVPVCQLA…LRNLDGLIYI (106 aa)). [2Fe-2S] cluster-binding residues include C86, H88, C106, and H109. The Fe cation site is built by H204, H209, and D360.

This sequence belongs to the bacterial ring-hydroxylating dioxygenase alpha subunit family. Homotrimer. The system is probably composed of an oxygenase subunit (Stc2) and two reductase subunits (Stc3 and Stc4). It depends on [2Fe-2S] cluster as a cofactor. Fe cation serves as cofactor.

The enzyme catalyses L-proline betaine + NADH + O2 + H(+) = N-methyl-L-proline + formaldehyde + NAD(+) + H2O. The catalysed reaction is L-proline betaine + NADPH + O2 + H(+) = N-methyl-L-proline + formaldehyde + NADP(+) + H2O. In terms of biological role, monooxygenase involved in the catabolism of stachydrine (L-proline betaine), a source of carbon and nitrogen. Part of a Rieske-type oxygenase system that catalyzes the demethylation of stachydrine to produce N-methyl-L-proline (monomethylproline). Stc2 is the catalytic subunit. This is Stachydrine N-demethylase from Rhizobium meliloti (strain 1021) (Ensifer meliloti).